Reading from the N-terminus, the 293-residue chain is tRNA (guanine-N(7)-)-methyltransferase (293 aa).

S-adenosyl-L-methionine is bound by residues Gly-105, 128-129 (EI), 163-164 (NT), and Cys-183. The active site involves Asp-186. 261–263 (TEE) is a binding site for S-adenosyl-L-methionine.

Belongs to the class I-like SAM-binding methyltransferase superfamily. TrmB family. As to quaternary structure, forms a complex with trm82.

The protein localises to the nucleus. The enzyme catalyses guanosine(46) in tRNA + S-adenosyl-L-methionine = N(7)-methylguanosine(46) in tRNA + S-adenosyl-L-homocysteine. It functions in the pathway tRNA modification; N(7)-methylguanine-tRNA biosynthesis. In terms of biological role, catalyzes the formation of N(7)-methylguanine at position 46 (m7G46) in tRNA. In Neurospora crassa (strain ATCC 24698 / 74-OR23-1A / CBS 708.71 / DSM 1257 / FGSC 987), this protein is tRNA (guanine-N(7)-)-methyltransferase (trm8).